The primary structure comprises 278 residues: Large ribosomal subunit protein uL2 (278 aa).

A disordered region spans residues 201–278 (HGNINDGKAG…IMRSRHQRKK (78 aa)). Residues 210–221 (GRSRWRGKKPHV) show a composition bias toward basic residues.

Belongs to the universal ribosomal protein uL2 family. Part of the 50S ribosomal subunit. Forms a bridge to the 30S subunit in the 70S ribosome.

In terms of biological role, one of the primary rRNA binding proteins. Required for association of the 30S and 50S subunits to form the 70S ribosome, for tRNA binding and peptide bond formation. It has been suggested to have peptidyltransferase activity; this is somewhat controversial. Makes several contacts with the 16S rRNA in the 70S ribosome. The polypeptide is Large ribosomal subunit protein uL2 (Rhizobium rhizogenes (strain K84 / ATCC BAA-868) (Agrobacterium radiobacter)).